We begin with the raw amino-acid sequence, 341 residues long: tRNA N6-adenosine threonylcarbamoyltransferase (341 aa).

Residues histidine 111 and histidine 115 each contribute to the Fe cation site. Substrate-binding positions include 134-138 (LVSGG), aspartate 167, glycine 180, and asparagine 272. Residue aspartate 300 participates in Fe cation binding.

Belongs to the KAE1 / TsaD family. It depends on Fe(2+) as a cofactor.

It is found in the cytoplasm. The enzyme catalyses L-threonylcarbamoyladenylate + adenosine(37) in tRNA = N(6)-L-threonylcarbamoyladenosine(37) in tRNA + AMP + H(+). Functionally, required for the formation of a threonylcarbamoyl group on adenosine at position 37 (t(6)A37) in tRNAs that read codons beginning with adenine. Is involved in the transfer of the threonylcarbamoyl moiety of threonylcarbamoyl-AMP (TC-AMP) to the N6 group of A37, together with TsaE and TsaB. TsaD likely plays a direct catalytic role in this reaction. In Blochmanniella pennsylvanica (strain BPEN), this protein is tRNA N6-adenosine threonylcarbamoyltransferase.